A 244-amino-acid chain; its full sequence is Transcriptional activator protein FnrA (244 aa).

One can recognise an HTH crp-type domain in the interval 159–232 (KTADERIATF…GKEVRILDSI (74 aa)). The H-T-H motif DNA-binding region spans 192 to 211 (RNEIGNYLGLAVETVSRVFT).

Transcriptional regulator of arginine deiminase. In Stutzerimonas stutzeri (Pseudomonas stutzeri), this protein is Transcriptional activator protein FnrA (fnrA).